Consider the following 483-residue polypeptide: Glutamyl-tRNA(Gln) amidotransferase subunit A (483 aa).

Catalysis depends on charge relay system residues lysine 75 and serine 150. Serine 174 serves as the catalytic Acyl-ester intermediate.

Belongs to the amidase family. GatA subfamily. In terms of assembly, heterotrimer of A, B and C subunits.

The catalysed reaction is L-glutamyl-tRNA(Gln) + L-glutamine + ATP + H2O = L-glutaminyl-tRNA(Gln) + L-glutamate + ADP + phosphate + H(+). In terms of biological role, allows the formation of correctly charged Gln-tRNA(Gln) through the transamidation of misacylated Glu-tRNA(Gln) in organisms which lack glutaminyl-tRNA synthetase. The reaction takes place in the presence of glutamine and ATP through an activated gamma-phospho-Glu-tRNA(Gln). This is Glutamyl-tRNA(Gln) amidotransferase subunit A from Legionella pneumophila (strain Corby).